A 124-amino-acid polypeptide reads, in one-letter code: Alpha-amylase inhibitor 0.19 (124 aa).

Cystine bridges form between C6/C52, C20/C41, C28/C83, C42/C99, and C54/C115.

Belongs to the protease inhibitor I6 (cereal trypsin/alpha-amylase inhibitor) family. In terms of assembly, homodimer. The disulfide bonds are essential for the inhibitor activity. In terms of tissue distribution, endosperm.

The protein resides in the secreted. Alpha-amylase inhibitor. The chain is Alpha-amylase inhibitor 0.19 from Triticum aestivum (Wheat).